Here is a 79-residue protein sequence, read N- to C-terminus: CDC42 small effector protein 1-B (79 aa).

Residues Cys-10 and Cys-11 are each lipidated (S-palmitoyl cysteine). In terms of domain architecture, CRIB spans 30-43 (IGEPMNFVHLTHIG). The disordered stretch occupies residues 41 to 79 (HIGSGDMGASDGLPKAGTVQEQMRSKCGRDRQWSNSRVL). The segment covering 63–72 (MRSKCGRDRQ) has biased composition (basic and acidic residues).

This sequence belongs to the CDC42SE/SPEC family.

The protein localises to the cytoplasm. It localises to the cytoskeleton. Its subcellular location is the cell membrane. Probably involved in the organization of the actin cytoskeleton by acting downstream of CDC42, inducing actin filament assembly. In Xenopus laevis (African clawed frog), this protein is CDC42 small effector protein 1-B (cdc42se1-b).